The sequence spans 476 residues: Glycogen synthase (476 aa).

Lysine 15 provides a ligand contact to ADP-alpha-D-glucose.

The protein belongs to the glycosyltransferase 1 family. Bacterial/plant glycogen synthase subfamily.

It carries out the reaction [(1-&gt;4)-alpha-D-glucosyl](n) + ADP-alpha-D-glucose = [(1-&gt;4)-alpha-D-glucosyl](n+1) + ADP + H(+). It functions in the pathway glycan biosynthesis; glycogen biosynthesis. Functionally, synthesizes alpha-1,4-glucan chains using ADP-glucose. The chain is Glycogen synthase from Streptococcus agalactiae serotype Ia (strain ATCC 27591 / A909 / CDC SS700).